The primary structure comprises 188 residues: Elongation factor P (188 aa).

A disordered region spans residues 139 to 163; it reads PVTKGQTASSSYKPATLSNGVRTQV. Polar residues predominate over residues 142-160; sequence KGQTASSSYKPATLSNGVR.

Belongs to the elongation factor P family.

The protein resides in the cytoplasm. The protein operates within protein biosynthesis; polypeptide chain elongation. Involved in peptide bond synthesis. Stimulates efficient translation and peptide-bond synthesis on native or reconstituted 70S ribosomes in vitro. Probably functions indirectly by altering the affinity of the ribosome for aminoacyl-tRNA, thus increasing their reactivity as acceptors for peptidyl transferase. The chain is Elongation factor P from Methylobacterium nodulans (strain LMG 21967 / CNCM I-2342 / ORS 2060).